A 452-amino-acid chain; its full sequence is Putative tripartite motif-containing protein 49B (452 aa).

The segment at 15–56 (CPICMNYFIDPVTIDCGHSFCRPCFYLNWKDSPFLVQCSECT) adopts an RING-type zinc-finger fold. Residues 88-129 (SEEQMCGTHRETKKMFCEVDRSLLCLLCSSSQEHRDHRHCPI) form a B box-type zinc finger. Positions 93, 96, 115, and 121 each coordinate Zn(2+). One can recognise a B30.2/SPRY domain in the interval 269–452 (ELSAGPITGL…LRPIFCCIHF (184 aa)).

The protein belongs to the TRIM/RBCC family.

The protein is Putative tripartite motif-containing protein 49B (TRIM49B) of Homo sapiens (Human).